The sequence spans 400 residues: CCA-adding enzyme (400 aa).

ATP-binding residues include G27 and R30. CTP is bound by residues G27 and R30. D40 and D42 together coordinate Mg(2+). ATP contacts are provided by R111, D154, R157, R160, and R163. CTP-binding residues include R111, D154, R157, R160, and R163.

It belongs to the tRNA nucleotidyltransferase/poly(A) polymerase family. Bacterial CCA-adding enzyme type 3 subfamily. Homodimer. The cofactor is Mg(2+).

The enzyme catalyses a tRNA precursor + 2 CTP + ATP = a tRNA with a 3' CCA end + 3 diphosphate. It carries out the reaction a tRNA with a 3' CCA end + 2 CTP + ATP = a tRNA with a 3' CCACCA end + 3 diphosphate. Its function is as follows. Catalyzes the addition and repair of the essential 3'-terminal CCA sequence in tRNAs without using a nucleic acid template. Adds these three nucleotides in the order of C, C, and A to the tRNA nucleotide-73, using CTP and ATP as substrates and producing inorganic pyrophosphate. tRNA 3'-terminal CCA addition is required both for tRNA processing and repair. Also involved in tRNA surveillance by mediating tandem CCA addition to generate a CCACCA at the 3' terminus of unstable tRNAs. While stable tRNAs receive only 3'-terminal CCA, unstable tRNAs are marked with CCACCA and rapidly degraded. This is CCA-adding enzyme from Bacillus pumilus (strain SAFR-032).